A 196-amino-acid polypeptide reads, in one-letter code: Calmodulin-like protein 4 (196 aa).

Residues 1-43 are disordered; it reads MAAEHLLPGPPPSLADFRLEAGGKGTERGSGSSKPTGSSRGPR. The span at 17 to 27 shows a compositional bias: basic and acidic residues; the sequence is FRLEAGGKGTE. The span at 29–39 shows a compositional bias: polar residues; the sequence is GSGSSKPTGSS. EF-hand domains follow at residues 51-86, 87-122, 124-159, and 160-195; these read DQINEYKECFSLYDKQQRGKIKATDLMVAMRCLGAS, PTPGEVQRHLQTHGIDGNGELDFSTFLTIMHMQIKQ, DPKKEILLAMLMVDKEKKGYVMASDLRSKLTSLGEK, and LTHKEVDDLFREADIEPNGKVKYDEFIHKITLPGRD.

It belongs to the calmodulin family. In terms of assembly, interacts with MYO7B; the interaction mediates the association of CALML4 with the IMAC/intermicrovillar adhesion complex. Interacts with MYO7A. In terms of tissue distribution, expressed in the intestinal tract. As to expression, dominant transcript in the intestinal tract.

The protein resides in the cell projection. Its subcellular location is the microvillus. Its function is as follows. As part of the intermicrovillar adhesion complex/IMAC plays a role in epithelial brush border differentiation, controlling microvilli organization and length. Acts as a light chain for MYO7B and is required for efficient targeting of the IMAC to the tips of border brush microvilli. This chain is Calmodulin-like protein 4, found in Homo sapiens (Human).